Consider the following 329-residue polypeptide: Malate dehydrogenase (329 aa).

Residue 12–18 (GAAGQIG) participates in NAD(+) binding. Arg93 and Arg99 together coordinate substrate. NAD(+) is bound by residues Asn106, Gln113, and 130 to 132 (VGN). Substrate-binding residues include Asn132 and Arg163. Catalysis depends on His188, which acts as the Proton acceptor.

The protein belongs to the LDH/MDH superfamily. MDH type 2 family.

It catalyses the reaction (S)-malate + NAD(+) = oxaloacetate + NADH + H(+). Catalyzes the reversible oxidation of malate to oxaloacetate. The protein is Malate dehydrogenase of Frankia alni (strain DSM 45986 / CECT 9034 / ACN14a).